Reading from the N-terminus, the 143-residue chain is ATP synthase subunit 9, mitochondrial (143 aa).

A mitochondrion-targeting transit peptide spans 1–62 (MAASRVFAQR…ARQAFAARRQ (62 aa)). Helical transmembrane passes span 85–105 (IGLGGAGIGIGVVFGSLLLAV) and 119–139 (AILGFAFVEAIGLFDLMVAMM).

Belongs to the ATPase C chain family. In terms of assembly, F-type ATPases have 2 components, CF(1) - the catalytic core - and CF(0) - the membrane proton channel. CF(1) has five subunits: alpha(3), beta(3), gamma(1), delta(1), epsilon(1). CF(0) has three main subunits: a, b and c.

Its subcellular location is the mitochondrion membrane. Mitochondrial membrane ATP synthase (F(1)F(0) ATP synthase or Complex V) produces ATP from ADP in the presence of a proton gradient across the membrane which is generated by electron transport complexes of the respiratory chain. F-type ATPases consist of two structural domains, F(1) - containing the extramembraneous catalytic core and F(0) - containing the membrane proton channel, linked together by a central stalk and a peripheral stalk. During catalysis, ATP synthesis in the catalytic domain of F(1) is coupled via a rotary mechanism of the central stalk subunits to proton translocation. Part of the complex F(0) domain. A homomeric c-ring of probably 10 subunits is part of the complex rotary element. In Emericella nidulans (strain FGSC A4 / ATCC 38163 / CBS 112.46 / NRRL 194 / M139) (Aspergillus nidulans), this protein is ATP synthase subunit 9, mitochondrial (atp9).